A 533-amino-acid polypeptide reads, in one-letter code: Probable protein kinase UbiB (533 aa).

The helical transmembrane segment at Leu24–Trp44 threads the bilayer. One can recognise a Protein kinase domain in the interval Arg126 to Gly494. Residues Leu132–Val140 and Lys154 each bind ATP. Asp289 acts as the Proton acceptor in catalysis. The chain crosses the membrane as a helical span at residues Leu510 to Ile530.

Belongs to the ABC1 family. UbiB subfamily.

Its subcellular location is the cell inner membrane. Its pathway is cofactor biosynthesis; ubiquinone biosynthesis [regulation]. Is probably a protein kinase regulator of UbiI activity which is involved in aerobic coenzyme Q (ubiquinone) biosynthesis. The sequence is that of Probable protein kinase UbiB from Pseudomonas aeruginosa (strain ATCC 15692 / DSM 22644 / CIP 104116 / JCM 14847 / LMG 12228 / 1C / PRS 101 / PAO1).